A 919-amino-acid chain; its full sequence is Coiled-coil domain-containing protein 66 (919 aa).

4 disordered regions span residues 145-166 (KEET…KDEN), 456-505 (ERDR…RERE), 724-744 (ERNN…LPSP), and 762-816 (LKSD…EPSH). The segment covering 150 to 161 (QDSLHLNNTSNQ) has biased composition (polar residues). Positions 467 to 558 (HQKAITAQVE…EQRIRELAQK (92 aa)) form a coiled coil. Positions 570-919 (GGYGLDDVSG…NQEENFNSSF (350 aa)) are mediates localization to cilia, centrosomes and spindle microtubules and the interaction with PCM1, CEP290, CEP104 and CSPP1.

As to quaternary structure, homodimer; disulfide-linked. Interacts with CEP290. Interacts with PCM1. Interacts with ARMC9, TOGARAM1, CSPP1 and CEP104. Interacts with CDK5RAP2, CEP152, CEP192, TBG1 and PRC1. In terms of tissue distribution, expressed in retina and blood. Expressed in retina, mainly in photoreceptors but also in outer plexiform and ganglion cell layers (at protein level).

It is found in the cytoplasm. It localises to the cytoskeleton. The protein resides in the microtubule organizing center. The protein localises to the centrosome. Its subcellular location is the centriolar satellite. It is found in the cell projection. It localises to the cilium. The protein resides in the cilium basal body. The protein localises to the cilium axoneme. Its subcellular location is the photoreceptor inner segment. It is found in the photoreceptor outer segment. Its function is as follows. Microtubule-binding protein required for ciliogenesis. May function in ciliogenesis by mediating the transport of proteins like BBS4 to the cilium, but also through the organization of the centriolar satellites. Required for the assembly of signaling-competent cilia with proper structure and length. Mediates this function in part by regulating transition zone assembly and basal body recruitment of the IFT-B complex. Cooperates with the ciliopathy proteins CSPP1 and CEP104 during cilium length regulation. Plays two important roles during cell division. First, is required for mitotic progression via regulation of spindle assembly, organization and orientation, levels of spindle microtubules (MTs), kinetochore-fiber integrity, and chromosome alignment. Second, functions during cytokinesis in part by regulating assembly and organization of central spindle and midbody MTs. Plays a role in retina morphogenesis and/or homeostasis. This Canis lupus familiaris (Dog) protein is Coiled-coil domain-containing protein 66 (CCDC66).